Consider the following 114-residue polypeptide: Dihydroneopterin monophosphate aldolase (114 aa).

His15, His26, and His28 together coordinate Zn(2+).

Belongs to the PTPS family. Zn(2+) serves as cofactor.

It catalyses the reaction 7,8-dihydroneopterin 3'-phosphate = glycolaldehyde phosphate + 6-hydroxymethyl-7,8-dihydropterin. Its function is as follows. Catalyzes the conversion of 7,8-dihydroneopterin monophosphate (H2NMP) to 6-hydroxymethyl-7,8-dihydropterin (6-HMD). Cannot use 7,8-dihydroneopterin (H2Neo) or 7,8-dihydroneopterin triphosphate (H2NTP) as substrate. This Pyrococcus furiosus (strain ATCC 43587 / DSM 3638 / JCM 8422 / Vc1) protein is Dihydroneopterin monophosphate aldolase.